Reading from the N-terminus, the 287-residue chain is MGRCTIADVAMLIRWRVSLMVAGATFFGAMLAVPHVTITHLLASLATFLLAGGCSAINQVQEADLDAVIPRTASRPIPCGRIGHMYGSLMGLALVTVGWMVLCLAGGLTSLLVGIGIVAVYNGLYTPLKRRTSFALLVGAAAGAMPPVVGWLAVGGHPASPMLVVVYTLYLLWQIPHFWLHAARDREAYRKARLPLPLLSLPHERYARLLKVWFHAYAVAVLMVPAFPLLEGVGMRIMVTLCGIALLFAAMLAVRKRRVALHIADAVLCAVMVVLLIDRLAIPVSLF.

The next 7 helical transmembrane spans lie at 19–39 (LMVA…VTIT), 100–120 (MVLC…IVAV), 134–154 (FALL…WLAV), 162–182 (MLVV…WLHA), 212–232 (VWFH…LLEG), 233–253 (VGMR…AMLA), and 267–287 (VLCA…VSLF).

This sequence belongs to the UbiA prenyltransferase family. Protoheme IX farnesyltransferase subfamily.

The protein localises to the cell inner membrane. It catalyses the reaction heme b + (2E,6E)-farnesyl diphosphate + H2O = Fe(II)-heme o + diphosphate. The protein operates within porphyrin-containing compound metabolism; heme O biosynthesis; heme O from protoheme: step 1/1. In terms of biological role, converts heme B (protoheme IX) to heme O by substitution of the vinyl group on carbon 2 of heme B porphyrin ring with a hydroxyethyl farnesyl side group. This is Protoheme IX farnesyltransferase from Nitratidesulfovibrio vulgaris (strain DP4) (Desulfovibrio vulgaris).